The following is a 392-amino-acid chain: Histidinol-phosphate aminotransferase 2 (392 aa).

Lys228 carries the N6-(pyridoxal phosphate)lysine modification.

It belongs to the class-II pyridoxal-phosphate-dependent aminotransferase family. Histidinol-phosphate aminotransferase subfamily. Homodimer. Pyridoxal 5'-phosphate serves as cofactor.

It carries out the reaction L-histidinol phosphate + 2-oxoglutarate = 3-(imidazol-4-yl)-2-oxopropyl phosphate + L-glutamate. Its pathway is amino-acid biosynthesis; L-histidine biosynthesis; L-histidine from 5-phospho-alpha-D-ribose 1-diphosphate: step 7/9. The polypeptide is Histidinol-phosphate aminotransferase 2 (Nitrosospira multiformis (strain ATCC 25196 / NCIMB 11849 / C 71)).